The sequence spans 213 residues: Thymidylate kinase (213 aa).

9-16 lines the ATP pocket; the sequence is GVEGCGKT.

It belongs to the thymidylate kinase family.

The enzyme catalyses dTMP + ATP = dTDP + ADP. In terms of biological role, phosphorylation of dTMP to form dTDP in both de novo and salvage pathways of dTTP synthesis. This Geotalea uraniireducens (strain Rf4) (Geobacter uraniireducens) protein is Thymidylate kinase.